The following is a 224-amino-acid chain: Peptidyl-prolyl cis-trans isomerase FKBP3 (224 aa).

Position 2 is an N-acetylalanine (A2). S36 carries the phosphoserine modification. The segment covering 89–102 (KLNEDKPKETKSEE) has biased composition (basic and acidic residues). Residues 89–111 (KLNEDKPKETKSEETLDEGPPKY) form a disordered region. K99 bears the N6-acetyllysine mark. In terms of domain architecture, PPIase FKBP-type spans 128–224 (GDVVHCWYTG…TFEVELVDID (97 aa)). Phosphoserine is present on S152. K170 is modified (N6-acetyllysine).

It belongs to the FKBP-type PPIase family.

The protein resides in the nucleus. The catalysed reaction is [protein]-peptidylproline (omega=180) = [protein]-peptidylproline (omega=0). Its activity is regulated as follows. Inhibited preferentially by rapamycin over FK506. FK506- and rapamycin-binding proteins (FKBPs) constitute a family of receptors for the two immunosuppressants which inhibit T-cell proliferation by arresting two distinct cytoplasmic signal transmission pathways. PPIases accelerate the folding of proteins. The chain is Peptidyl-prolyl cis-trans isomerase FKBP3 (FKBP3) from Homo sapiens (Human).